The primary structure comprises 84 residues: U21-theraphotoxin-Cg1b (84 aa).

An N-terminal signal peptide occupies residues 1-21; that stretch reads MKVSVLITLAVLGVMFLLTSA. Residues 22 to 47 constitute a propeptide that is removed on maturation; the sequence is EERGSDQMDSPAWLKSMERIFQSEER. 3 cysteine pairs are disulfide-bonded: Cys-49–Cys-63, Cys-56–Cys-68, and Cys-62–Cys-76. A Phenylalanine amide modification is found at Phe-82.

Belongs to the neurotoxin 10 (Hwtx-1) family. 05 (F4a) subfamily. As to expression, expressed by the venom gland.

It is found in the secreted. In terms of biological role, probable ion channel inhibitor. This Chilobrachys guangxiensis (Chinese earth tiger tarantula) protein is U21-theraphotoxin-Cg1b.